Reading from the N-terminus, the 155-residue chain is 6,7-dimethyl-8-ribityllumazine synthase (155 aa).

5-amino-6-(D-ribitylamino)uracil is bound by residues Trp-22, 56–58 (SYE), and 80–82 (AVI). Residue 85 to 86 (DT) participates in (2S)-2-hydroxy-3-oxobutyl phosphate binding. Catalysis depends on His-88, which acts as the Proton donor. A 5-amino-6-(D-ribitylamino)uracil-binding site is contributed by Phe-113. Arg-127 lines the (2S)-2-hydroxy-3-oxobutyl phosphate pocket.

Belongs to the DMRL synthase family.

The enzyme catalyses (2S)-2-hydroxy-3-oxobutyl phosphate + 5-amino-6-(D-ribitylamino)uracil = 6,7-dimethyl-8-(1-D-ribityl)lumazine + phosphate + 2 H2O + H(+). It functions in the pathway cofactor biosynthesis; riboflavin biosynthesis; riboflavin from 2-hydroxy-3-oxobutyl phosphate and 5-amino-6-(D-ribitylamino)uracil: step 1/2. In terms of biological role, catalyzes the formation of 6,7-dimethyl-8-ribityllumazine by condensation of 5-amino-6-(D-ribitylamino)uracil with 3,4-dihydroxy-2-butanone 4-phosphate. This is the penultimate step in the biosynthesis of riboflavin. The polypeptide is 6,7-dimethyl-8-ribityllumazine synthase (Deinococcus radiodurans (strain ATCC 13939 / DSM 20539 / JCM 16871 / CCUG 27074 / LMG 4051 / NBRC 15346 / NCIMB 9279 / VKM B-1422 / R1)).